The sequence spans 846 residues: MSRFTSATHGLNLSIKMPISVSQVPSIRSNTSKYELQKLRSTGRSVLQTRRQLAIINMTKRSEADDNDGVERRKGVFHPNLWDDGFIQSLSTVYHEQASYRERAERLIGEVKAVFDSISMGDGDQFISPSAYDTAWVARVPAIDGSSRPQFPQAIDWILLNQQQDGSWGSQSHLSLTHRLTDTLACVIALASWKIESVQIDEGLDFITRGVEKLQSESVPAEFEIIFAELLNQAKSLQLSLPYEHSCLQSLWRKQEPILANGLMDSVAKRSLSSLEEMQDHRMNTDSDGTMHVESFLSSPAVAARVLMRTGNPICLAYLNNVLNKFGDYVPGMYPVDLFQRLWMVDNVERLGIDRHFKKEIQVTLDYVYSYWNGKGIGCGRDSLSPDLNSTSLGFRTLRLHGYNVSADVLEHFKDRDGKFVCSSNPTVGEIRSVLNLYRASLLAFPGEKVMEEAETFARRYLEEIVQKIPPSKFSREIEYVLEFGWQSTVPRWEARSYIDFHGLDTYSPWTIYEMASEKFLELAKLEFNIFNSLQHTELQYLSRWWNDSGMSQMRFTRHRNVEYYTMASCIAMEPSQSAFRIGFTKLCGIATCIDDIYDTYGTIDELKLFREAVKRWDPSAIESLPEYMKSVYMVLYELVNEMAQDTERTQGRDTLDYARNAWEAIIDAHLVEAEWIASGHIPTFEEYLENSKVTSGLHIAILPILTLDVPLPDQLPLQEIDTLSRFHHLASTIGRLSGDMNAYKIDLAHGEESSCISCYMKDNPGTTEGDAHNYANVTISYLMKELNLELMGQHNRVSFLRTSKKPAFDIYRASNYMYKYRDGYTIADKETKNLVMRTLVQAVSL.

The N-terminal 58 residues, Met-1–Met-58, are a transit peptide targeting the chloroplast. Residues Asp-595, Asp-599, and Asp-747 each contribute to the Mg(2+) site. The short motif at Asp-595–Asp-599 is the DDXXD motif element.

This sequence belongs to the terpene synthase family. Mg(2+) serves as cofactor. Expressed in young and mature roots. Expressed at low levels in barks.

The protein resides in the plastid. The protein localises to the chloroplast. It carries out the reaction (2E,6E,10E)-geranylgeranyl diphosphate = pseudolaratriene + diphosphate. The protein operates within terpene metabolism. Functionally, converts geranylgeranyl diphosphate to an new 5,7-fused bicyclic diterpene, named pseudolaratriene. Catalyzes the first committed step in pseudolaric acid B (PAB) biosynthesis. PAB exhibits antiproliferative activity by inhibiting microtubule polymerization, and has demonstrated antitumor properties against several cancer types. This is Pseudolaratriene synthase, chloroplastic from Pseudolarix amabilis (Golden larch).